The sequence spans 260 residues: Large ribosomal subunit protein uL4 (260 aa).

It belongs to the universal ribosomal protein uL4 family. As to quaternary structure, part of the 50S ribosomal subunit.

Functionally, one of the primary rRNA binding proteins, this protein initially binds near the 5'-end of the 23S rRNA. It is important during the early stages of 50S assembly. It makes multiple contacts with different domains of the 23S rRNA in the assembled 50S subunit and ribosome. Its function is as follows. Forms part of the polypeptide exit tunnel. In Methanopyrus kandleri (strain AV19 / DSM 6324 / JCM 9639 / NBRC 100938), this protein is Large ribosomal subunit protein uL4.